Reading from the N-terminus, the 2049-residue chain is Non-reducing polyketide synthase hmp3 (2049 aa).

Positions 9 to 246 (LYFGDQTDSW…NELSIHALQH (238 aa)) are N-terminal acylcarrier protein transacylase (SAT) domain. One can recognise a Ketosynthase family 3 (KS3) domain in the interval 365–793 (PGRIAIVGMA…GGNASLILED (429 aa)). Catalysis depends on for beta-ketoacyl synthase activity residues Cys538, His673, and His712. The tract at residues 887–1146 (VFVFTGQGSH…VDFVGALGAL (260 aa)) is malonyl-CoA:ACP transacylase (MAT) domain. Catalysis depends on Ser978, which acts as the For acyl/malonyl transferase activity. Residues 1265 to 1404 (QQIVEESSSP…AQTLQTSWNR (140 aa)) form an N-terminal hotdog fold region. Residues 1265-1573 (QQIVEESSSP…FHEVSNNVLD (309 aa)) enclose the PKS/mFAS DH domain. The segment at 1269–1572 (EESSSPSLHV…SFHEVSNNVL (304 aa)) is product template (PT) domain. Residues 1425–1573 (GHRMLPSILY…FHEVSNNVLD (149 aa)) form a C-terminal hotdog fold region. Residues 1626 to 1704 (SSESELFHTI…DLRNEFARSS (79 aa)) enclose the Carrier domain. Ser1663 bears the O-(pantetheine 4'-phosphoryl)serine mark. A disordered region spans residues 1700–1747 (FARSSTSTPPSKTFSEFSIVDATPESTRSSSRAPSEKKEPAPASEKSE). Residues 1703–1717 (SSTSTPPSKTFSEFS) show a composition bias toward low complexity. Over residues 1723 to 1732 (PESTRSSSRA) the composition is skewed to polar residues. Residues 1733 to 1747 (PSEKKEPAPASEKSE) are compositionally biased toward basic and acidic residues. Positions 1761–1951 (SPLPSARITL…KRTAIIWAKK (191 aa)) are thioesterase (TE) domain.

The protein operates within secondary metabolite biosynthesis. In terms of biological role, non-reducing polyketide synthase; part of the gene cluster that mediates the biosynthesis of hypothemycin, a resorcylic acid lactone (RAL) that irreversibly inhibits a subset of protein kinases with a conserved cysteine in the ATP binding site such as human ERK2. The first step is performed by both PKSs hmp3 and hmp8 and leads to the production of 7',8'-dehydrozearalenol (DHZ). The highly reducing PKS hpm8 synthesizes the reduced hexaketide (7S,11S,2E,8E)-7,11-dihydroxy-dodeca-2,8-dienoate, which is transferred downstream to the non-reducing PKS hpm3. Hpm3 then extends the reduced hexaketide to a nonaketide, after which regioselective cyclization and macrolactonization affords DHZ. The next step is the conversion of DHZ into aigialomycin C and is performed by the O-methyltransferase hmp5, the FAD-binding monooxygenase hmp7, and the cytochrome P450 monooxygenase hmp1. The wide substrate tolerance of the hmp5 and hmp7 implies that the reactions from DHZ to aigialomycin C can occur in any order. The steps from aigialomycin C to hypothemycin are less well established. The FAD-linked oxidoreductase hmp9 presumably catalyzes oxidation of the C-6' hydroxyl to a ketone. The timing of this oxidation is important, since the resulting enone functional group is a Michael acceptor that can react spontaneously with glutathione, an abundant metabolite in fungal cells. The glutathione S-transferase hmp2 catalyzes cis-trans isomerization of the 7',8' double bond with equilibrium favoring the trans isomer. The hpm6-encoded transporter might preferentially pump hypothemycin out of the cell relative to the trans isomer aigialomycin A. The cis-to-trans isomerization may be coupled with C-4' hydroxylation, since all known hypothemycin analogs containing the enone functional group also have hydroxyl groups at both C-4' and C-5'. This is Non-reducing polyketide synthase hmp3 from Hypomyces subiculosus (Nectria subiculosa).